The sequence spans 347 residues: Spermidine/putrescine import ATP-binding protein PotA (347 aa).

The region spanning 6–238 is the ABC transporter domain; that stretch reads LEIRNLSHYY…PKTKFVADFI (233 aa). 40–47 contacts ATP; sequence GPSGCGKT.

The protein belongs to the ABC transporter superfamily. Spermidine/putrescine importer (TC 3.A.1.11.1) family. In terms of assembly, the complex is composed of two ATP-binding proteins (PotA), two transmembrane proteins (PotB and PotC) and a solute-binding protein (PotD).

Its subcellular location is the cell inner membrane. The catalysed reaction is ATP + H2O + polyamine-[polyamine-binding protein]Side 1 = ADP + phosphate + polyamineSide 2 + [polyamine-binding protein]Side 1.. Its function is as follows. Part of the ABC transporter complex PotABCD involved in spermidine/putrescine import. Responsible for energy coupling to the transport system. This chain is Spermidine/putrescine import ATP-binding protein PotA, found in Borrelia garinii subsp. bavariensis (strain ATCC BAA-2496 / DSM 23469 / PBi) (Borreliella bavariensis).